Here is a 241-residue protein sequence, read N- to C-terminus: dTTP/UTP pyrophosphatase (241 aa).

Serine 38 is subject to Phosphoserine. The active-site Proton acceptor is aspartate 105.

This sequence belongs to the Maf family. YhdE subfamily. It depends on a divalent metal cation as a cofactor.

The protein resides in the cytoplasm. The protein localises to the nucleus. It catalyses the reaction dTTP + H2O = dTMP + diphosphate + H(+). The catalysed reaction is UTP + H2O = UMP + diphosphate + H(+). In terms of biological role, nucleoside triphosphate pyrophosphatase that hydrolyzes dTTP and UTP. May have a dual role in cell division arrest and in preventing the incorporation of modified nucleotides into cellular nucleic acids. The protein is dTTP/UTP pyrophosphatase of Schizosaccharomyces pombe (strain 972 / ATCC 24843) (Fission yeast).